Reading from the N-terminus, the 101-residue chain is MAKISAVNRNAKRARMAGRDKAKRIALKNIIMDRTLPVEDRFEASMKLAELPRNGSRVRVRLRCKLTGRARANYRKFELCRVALRDLASSGQIPGMVKSSW.

It belongs to the universal ribosomal protein uS14 family. In terms of assembly, part of the 30S ribosomal subunit. Contacts proteins S3 and S10.

In terms of biological role, binds 16S rRNA, required for the assembly of 30S particles and may also be responsible for determining the conformation of the 16S rRNA at the A site. This chain is Small ribosomal subunit protein uS14, found in Gluconacetobacter diazotrophicus (strain ATCC 49037 / DSM 5601 / CCUG 37298 / CIP 103539 / LMG 7603 / PAl5).